The following is a 331-amino-acid chain: Nucleotide sugar transporter SLC35B4 (331 aa).

11 helical membrane passes run 4-24, 30-50, 59-79, 92-112, 117-137, 153-173, 201-221, 229-249, 251-267, 268-288, and 291-311; these read ALAVGLVFAGCCSNVIFLELL, GCGNIVTFAQFLFIAVEGFLF, PAIPIRYYAIMVTMFFTVSVV, LHMIFRSGSLIANMILGIIIL, SIFKYTSIALVSVGIFICTFM, GFQAFVWWLLGIGALTFALLM, ALPLPGFIFLASDIYDHAVLF, IPGIGVTLPIMWFYLLMNIIT, YVCIRGVFILTTECASL, TVTLVVTLRKFVSLIFSILYF, and PFTLWHWLGTLFVFIGTLMYT. The short motif at 326–331 is the Mediates endoplasmic reticulum retention element; the sequence is KDNKKN.

The protein belongs to the nucleotide-sugar transporter family. SLC35B subfamily.

It localises to the endoplasmic reticulum membrane. The catalysed reaction is UDP-N-acetyl-alpha-D-glucosamine(in) + UDP-alpha-D-glucuronate(out) = UDP-N-acetyl-alpha-D-glucosamine(out) + UDP-alpha-D-glucuronate(in). It catalyses the reaction UDP-alpha-D-xylose(in) + UDP-alpha-D-glucuronate(out) = UDP-alpha-D-xylose(out) + UDP-alpha-D-glucuronate(in). In terms of biological role, antiporter that transports nucleotide sugars across the endoplasmic reticulum (ER) membrane in exchange for another nucleotide sugar. May couple UDP-alpha-D-glucuronate (UDP-GlcA) or UDP-alpha-D-xylose (UDP-Xyl) efflux to UDP-alpha-D-glucuronate (UDP-GlcA) influx into the ER lumen, which in turn stimulates glucuronidation and excretion of endobiotics and xenobiotics. The sequence is that of Nucleotide sugar transporter SLC35B4 (SLC35B4) from Macaca fascicularis (Crab-eating macaque).